A 362-amino-acid chain; its full sequence is Dihydroorotate dehydrogenase (quinone) (362 aa).

FMN contacts are provided by residues 62-66 and Thr-86; that span reads AGYDK. Lys-66 provides a ligand contact to substrate. A substrate-binding site is contributed by 111–115; sequence NRLGF. 2 residues coordinate FMN: Asn-139 and Asn-170. A substrate-binding site is contributed by Asn-170. Ser-173 (nucleophile) is an active-site residue. Asn-175 is a binding site for substrate. 2 residues coordinate FMN: Lys-215 and Ser-243. 244 to 245 contacts substrate; sequence NT. FMN-binding positions include Gly-266, Gly-295, and 316–317; that span reads YS.

This sequence belongs to the dihydroorotate dehydrogenase family. Type 2 subfamily. Monomer. The cofactor is FMN.

The protein resides in the cell membrane. The catalysed reaction is (S)-dihydroorotate + a quinone = orotate + a quinol. Its pathway is pyrimidine metabolism; UMP biosynthesis via de novo pathway; orotate from (S)-dihydroorotate (quinone route): step 1/1. Catalyzes the conversion of dihydroorotate to orotate with quinone as electron acceptor. The polypeptide is Dihydroorotate dehydrogenase (quinone) (Rhizobium etli (strain ATCC 51251 / DSM 11541 / JCM 21823 / NBRC 15573 / CFN 42)).